The sequence spans 357 residues: Putative F-box/kelch-repeat protein At5g38680 (357 aa).

In terms of domain architecture, F-box spans 14-61 (NSNPSLPDALIISCIARVSRLYYPILSFVSKSFRSLLASPELYKERSL). Kelch repeat units lie at residues 131-175 (NIYN…VLDG), 177-224 (IYVA…SKSL), 226-267 (IDEK…YCEI), and 268-313 (ENVL…GGKK).

This Arabidopsis thaliana (Mouse-ear cress) protein is Putative F-box/kelch-repeat protein At5g38680.